We begin with the raw amino-acid sequence, 318 residues long: Porphobilinogen deaminase (318 aa).

At C241 the chain carries S-(dipyrrolylmethanemethyl)cysteine.

This sequence belongs to the HMBS family. Monomer. Dipyrromethane is required as a cofactor.

The enzyme catalyses 4 porphobilinogen + H2O = hydroxymethylbilane + 4 NH4(+). It participates in porphyrin-containing compound metabolism; protoporphyrin-IX biosynthesis; coproporphyrinogen-III from 5-aminolevulinate: step 2/4. Functionally, tetrapolymerization of the monopyrrole PBG into the hydroxymethylbilane pre-uroporphyrinogen in several discrete steps. In Geobacter metallireducens (strain ATCC 53774 / DSM 7210 / GS-15), this protein is Porphobilinogen deaminase.